A 379-amino-acid chain; its full sequence is Demethylspheroidene O-methyltransferase (379 aa).

S-adenosyl-L-methionine contacts are provided by Asp-235 and Arg-279.

This sequence belongs to the class I-like SAM-binding methyltransferase superfamily. Cation-independent O-methyltransferase family.

It carries out the reaction demethylspheroidene + S-adenosyl-L-methionine = spheroidene + S-adenosyl-L-homocysteine + H(+). It participates in carotenoid biosynthesis; spheroidene biosynthesis. Functionally, methyltransferase that mediates the O-methylation of 1-hydroxy carotenoids. Converts hydroxyneurosporene to methoxyneurosporene or demethylspheroidene to spheroidene. Also able to produce spirilloxanthin. The protein is Demethylspheroidene O-methyltransferase (crtF) of Cereibacter sphaeroides (strain ATCC 17023 / DSM 158 / JCM 6121 / CCUG 31486 / LMG 2827 / NBRC 12203 / NCIMB 8253 / ATH 2.4.1.) (Rhodobacter sphaeroides).